Consider the following 175-residue polypeptide: Threonylcarbamoyl-AMP synthase (175 aa).

Positions Met-1 to Val-175 constitute a YrdC-like domain.

This sequence belongs to the SUA5 family. TsaC subfamily.

Its subcellular location is the cytoplasm. It catalyses the reaction L-threonine + hydrogencarbonate + ATP = L-threonylcarbamoyladenylate + diphosphate + H2O. Required for the formation of a threonylcarbamoyl group on adenosine at position 37 (t(6)A37) in tRNAs that read codons beginning with adenine. Catalyzes the conversion of L-threonine, HCO(3)(-)/CO(2) and ATP to give threonylcarbamoyl-AMP (TC-AMP) as the acyladenylate intermediate, with the release of diphosphate. This is Threonylcarbamoyl-AMP synthase from Buchnera aphidicola subsp. Acyrthosiphon pisum (strain APS) (Acyrthosiphon pisum symbiotic bacterium).